We begin with the raw amino-acid sequence, 570 residues long: Putative diflavin flavoprotein A 6 (570 aa).

A zinc metallo-hydrolase region spans residues 38 to 231 (AKGTTANSYL…FPTRLYATGH (194 aa)). In terms of domain architecture, Flavodoxin-like spans 260–402 (VALIYASAYG…AGTDFAQALK (143 aa)). The tract at residues 421 to 570 (VGRIVGSLCV…VHHRKSGNHY (150 aa)) is flavodoxin-reductase-like.

This sequence in the N-terminal section; belongs to the zinc metallo-hydrolase group 3 family. It in the C-terminal section; belongs to the flavodoxin reductase family. Fe cation serves as cofactor.

Its function is as follows. Mediates electron transfer from NADH to oxygen, reducing it to water. This modular protein has 3 redox cofactors, in other organisms the same activity requires 2 or 3 proteins. The protein is Putative diflavin flavoprotein A 6 (dfa6) of Nostoc sp. (strain PCC 7120 / SAG 25.82 / UTEX 2576).